Here is a 1040-residue protein sequence, read N- to C-terminus: Multidrug resistance protein MdtB (1040 aa).

Transmembrane regions (helical) follow at residues 25–45 (LLMAAMLLAGIIGYRFLPVAA), 347–367 (LMLAIALVVMIIYLFLRNIPA), 369–389 (IIPGVAVPLSLIGTFAVMVFL), 396–416 (LTLMALTIATGFVVDDAIVVI), 440–460 (IGFTIISLTFSLIAVLIPLLF), 472–492 (FAVTLAVAILISAVVSLTLTP), 537–557 (WLTLSVAFATLLLSVMLWIVI), 869–889 (LIVAAVVAMYIVLGVLYESFI), 890–910 (HPITILSTLPTAGVGALLALM), 911–931 (IAGSELDIIAIIGIILLIGIV), 968–988 (ILMTTLAALLGALPLMLSTGV), and 998–1018 (IAMVGGLLVSQILTLFTTPVI).

It belongs to the resistance-nodulation-cell division (RND) (TC 2.A.6) family. MdtB subfamily. As to quaternary structure, part of a tripartite efflux system composed of MdtA, MdtB and MdtC. MdtB forms a heteromultimer with MdtC.

The protein resides in the cell inner membrane. The protein is Multidrug resistance protein MdtB of Salmonella arizonae (strain ATCC BAA-731 / CDC346-86 / RSK2980).